The following is a 329-amino-acid chain: Centromere protein L (329 aa).

Residues Ser40 and Ser54 each carry the phosphoserine modification.

This sequence belongs to the CENP-L/IML3 family. As to quaternary structure, component of the CENPA-CAD complex, composed of CENPI, CENPK, CENPL, CENPO, CENPP, CENPQ, CENPR and CENPS. The CENPA-CAD complex interacts with the CENPA-NAC complex, at least composed of CENPA, CENPC, CENPH, CENPM, CENPN, CENPT and CENPU.

Its subcellular location is the nucleus. It localises to the chromosome. The protein localises to the centromere. Component of the CENPA-CAD (nucleosome distal) complex, a complex recruited to centromeres which is involved in assembly of kinetochore proteins, mitotic progression and chromosome segregation. May be involved in incorporation of newly synthesized CENPA into centromeres via its interaction with the CENPA-NAC complex. The sequence is that of Centromere protein L (Cenpl) from Mus musculus (Mouse).